The sequence spans 294 residues: Probable enoyl-CoA hydratase echA12 (294 aa).

Belongs to the enoyl-CoA hydratase/isomerase family.

It catalyses the reaction a (3S)-3-hydroxyacyl-CoA = a (2E)-enoyl-CoA + H2O. It carries out the reaction a 4-saturated-(3S)-3-hydroxyacyl-CoA = a (3E)-enoyl-CoA + H2O. Its function is as follows. Could possibly oxidize fatty acids using specific components. This Mycobacterium leprae (strain TN) protein is Probable enoyl-CoA hydratase echA12 (echA12).